A 124-amino-acid polypeptide reads, in one-letter code: UPF0235 protein (124 aa).

Positions 1–22 (MTKKGSSNSSKQQQQQQQIIIN) are disordered.

Belongs to the UPF0235 family.

The polypeptide is UPF0235 protein (Dictyostelium discoideum (Social amoeba)).